Here is a 340-residue protein sequence, read N- to C-terminus: Proline-rich transmembrane protein 2 (340 aa).

The disordered stretch occupies residues 1–261 (MAASSSEISE…AGPGVEGGEG (261 aa)). Residues 1-268 (MAASSSEISE…GEGTQKPRDY (268 aa)) lie on the Cytoplasmic side of the membrane. Over residues 9–18 (SEMKGVEESP) the composition is skewed to basic and acidic residues. Phosphoserine is present on S28. Position 74 is a phosphothreonine (T74). 2 stretches are compositionally biased toward pro residues: residues 131–155 (PPEPAPEPAPQPDPRPDSQPTPKPA) and 197–207 (APEPHSPPSKK). Phosphoserine is present on S238. R240 is subject to Omega-N-methylarginine. A phosphoserine mark is found at S248 and S249. An intramembrane region (helical) is located at residues 269–289 (IILAILSCFCPMWPVNIVAFA). The Cytoplasmic segment spans residues 290–317 (YAVMSRNSLQQGDVDGAQRLGRVAKLLS). The chain crosses the membrane as a helical span at residues 318 to 338 (IVALVGGVLIIIASCVINLGV). Over 339-340 (YK) the chain is Extracellular.

It belongs to the CD225/Dispanin family. In terms of assembly, component of the outer core of AMPAR complex. AMPAR complex consists of an inner core made of 4 pore-forming GluA/GRIA proteins (GRIA1, GRIA2, GRIA3 and GRIA4) and 4 major auxiliary subunits arranged in a twofold symmetry. One of the two pairs of distinct binding sites is occupied either by CNIH2, CNIH3 or CACNG2, CACNG3. The other harbors CACNG2, CACNG3, CACNG4, CACNG8 or GSG1L. This inner core of AMPAR complex is complemented by outer core constituents binding directly to the GluA/GRIA proteins at sites distinct from the interaction sites of the inner core constituents. Outer core constituents include at least PRRT1, PRRT2, CKAMP44/SHISA9, FRRS1L and NRN1. The proteins of the inner and outer core serve as a platform for other, more peripherally associated AMPAR constituents. Alone or in combination, these auxiliary subunits control the gating and pharmacology of the AMPAR complex and profoundly impact their biogenesis and protein processing. Interacts with intersectin 1/ITSN1. Interacts with SNARE complex components, including SNAP25, STX1A, SYT1 and SYT2; this interaction may inhibit SNARE complex formation.

It localises to the cell membrane. The protein resides in the presynaptic cell membrane. The protein localises to the synapse. It is found in the cell projection. Its subcellular location is the axon. It localises to the cytoplasmic vesicle. The protein resides in the secretory vesicle. The protein localises to the synaptic vesicle membrane. It is found in the postsynaptic density membrane. Its subcellular location is the dendritic spine. In terms of biological role, as a component of the outer core of AMPAR complex, may be involved in synaptic transmission in the central nervous system. In hippocampal neurons, in presynaptic terminals, plays an important role in the final steps of neurotransmitter release, possibly by regulating Ca(2+)-sensing. In the cerebellum, may inhibit SNARE complex formation and down-regulate short-term facilitation. This Homo sapiens (Human) protein is Proline-rich transmembrane protein 2 (PRRT2).